Reading from the N-terminus, the 347-residue chain is NADH-ubiquinone oxidoreductase chain 2 (347 aa).

Transmembrane regions (helical) follow at residues 1–21 (MNPF…MIVM), 59–79 (YFMT…INLL), 93–115 (TASM…HFWV), 149–169 (INPN…GWGG), 178–198 (IMAY…IYNP), 201–221 (TILN…MFAL), 239–259 (IITT…PLTG), 274–294 (DSII…YFYM), and 325–345 (LLPT…MLVV).

The protein belongs to the complex I subunit 2 family. Core subunit of respiratory chain NADH dehydrogenase (Complex I) which is composed of 45 different subunits. Interacts with TMEM242.

The protein localises to the mitochondrion inner membrane. It carries out the reaction a ubiquinone + NADH + 5 H(+)(in) = a ubiquinol + NAD(+) + 4 H(+)(out). Its function is as follows. Core subunit of the mitochondrial membrane respiratory chain NADH dehydrogenase (Complex I) which catalyzes electron transfer from NADH through the respiratory chain, using ubiquinone as an electron acceptor. Essential for the catalytic activity and assembly of complex I. This chain is NADH-ubiquinone oxidoreductase chain 2, found in Hippopotamus amphibius (Hippopotamus).